The chain runs to 203 residues: MAANPGNKIRNAKLVLLGDVGTGKSSLVLRFVKGQFVEFQESTIGAAFFSQTLAVNDETVKFEIWDTAGQERYHSLAPMYYRGAAAAIVVYDITNAASFTRAKKWVQELQAQGNPNTIMALAGNKADMVEARQVPAEEAKTYAQENGLFFMETSAKTAINVNDVFHEIAKRLLQGQQAQDTPAGMVLNQRPAERMVSSSSCCS.

Residue 18–26 (GDVGTGKSS) coordinates GTP. The Effector region signature appears at 40–48 (QESTIGAAF). Residues 66 to 70 (DTAGQ), 124 to 127 (NKAD), and 154 to 155 (SA) contribute to the GTP site. Residues Cys-201 and Cys-202 are each lipidated (S-geranylgeranyl cysteine).

The protein belongs to the small GTPase superfamily. Rab family. Interacts with VPS9A. Interacts with NSF and RBP-L. In terms of tissue distribution, highly expressed in roots. Expressed at low levels in shoots, flowers and grains.

The protein resides in the prevacuolar compartment membrane. The protein localises to the golgi apparatus membrane. It localises to the cell membrane. Its subcellular location is the protein storage vacuole membrane. Plays an important role in intracellular trafficking of seed storage proteins to the protein storage vacuoles (PSVs). Participates in the transport of the proglutelins from the Golgi apparatus to the PSVs in endosperm. Functions cooperatively with VPS9A to regulate post-Golgi dense vesicle-mediated transport of storage proteins to the type II protein bodies (PBII) protein storage vacuoles in developing endosperm. Involved in the maintenance of the general structural organization of the endomembrane system in developing endosperm. Binds GTP in vitro. Forms a quaternary complex with the two glutelin zipcode RNA-binding proteins RBP-L and RBP-P, and the membrane trafficking factor NSF. This quaternay complex carries glutelin mRNAs for active transport on endosomes to the cortical endoplasmic reticulum membrane, and enables endosome-mediated glutelin mRNA transport in endosperm cells. This chain is Ras-related protein Rab5A, found in Oryza sativa subsp. japonica (Rice).